The chain runs to 662 residues: Transcription activator of gluconeogenesis NECHADRAFT_59099 (662 aa).

The tract at residues 1 to 61 is disordered; it reads MPHEMEENGA…KDPLRPRRKK (61 aa). Composition is skewed to basic and acidic residues over residues 25–34 and 43–56; these read TFLKDDEKMT and TEVK…DPLR. A DNA-binding region (zn(2)-C6 fungal-type) is located at residues 66–94; it reads CFACQRAHLTCGDERPCQRCIKRGLADAC. Disordered regions lie at residues 105 to 149, 502 to 524, and 580 to 606; these read LHDA…TGSN, YSGR…MTTP, and YRAP…SSRV. 2 stretches are compositionally biased toward polar residues: residues 121-130 and 137-149; these read YNPTPTPSRT and SSQS…TGSN. The 72-residue stretch at 448–519 folds into the PAS domain; sequence TLVEYDDFLQ…TNTPDHNSQG (72 aa). Residues 582-593 show a composition bias toward basic and acidic residues; the sequence is APQDPDQKEPGS.

Belongs to the ERT1/acuK family.

It is found in the nucleus. Its function is as follows. Transcription factor which regulates nonfermentable carbon utilization. Activator of gluconeogenetic genes. The protein is Transcription activator of gluconeogenesis NECHADRAFT_59099 of Fusarium vanettenii (strain ATCC MYA-4622 / CBS 123669 / FGSC 9596 / NRRL 45880 / 77-13-4) (Fusarium solani subsp. pisi).